The chain runs to 427 residues: MSQQEVCPLNLFQSAQGTGRVCMRVCVCERGRELAVLYRAAMGNAQKKGPGYREGGGPNSQPGTPGRRRSHGLNNAANSKEVPGSSPAANGSLPAGKSQDEPQGPGSAGESCNLDAPCGALPPPLARLKNQGNMLFKNGQFGDALEKYTQAIDGCIEAGIDSPEDLCVLYSNRAACFLKDGNSADCIQDCTRALELHPFSLKPLLRRAMAYESLERYRKAYVDYKTVLQIDISVQAAHDSVHRITKMLIEQDGPDWREKLPEIPAVPLSAQQHRKEEPSAELLQARAERAEQEKARKAEARFTILKQEGNELVKNSQFQGASEKYSECLAIKPNECAIYTNRALCFLKLERFAEAKQDCDSALQMEPKNKKAFYRRALAHKGLKDYLSASTDLQEVLQLDPNVQEAEQELEMVTNLLRESLLANAQG.

Positions 46 to 113 are disordered; that stretch reads QKKGPGYREG…GPGSAGESCN (68 aa). 6 TPR repeats span residues 125-158, 167-200, 202-234, 302-335, 336-369, and 371-403; these read LARL…CIEA, CVLY…HPFS, KPLL…DISV, FTIL…KPNE, CAIY…EPKN, and KAFY…DPNV.

Its subcellular location is the cytoplasm. It localises to the dynein axonemal particle. Functionally, may play a role in the cytoplasmic assembly and/or trafficking of the axonemal dynein arms. The protein is Sperm-associated antigen 1A (spag1a) of Danio rerio (Zebrafish).